The sequence spans 370 residues: UDP-N-acetylglucosamine--N-acetylmuramyl-(pentapeptide) pyrophosphoryl-undecaprenol N-acetylglucosamine transferase (370 aa).

UDP-N-acetyl-alpha-D-glucosamine-binding positions include 10–12 (TGG), Asn126, Ser200, Ile255, and Gln300.

The protein belongs to the glycosyltransferase 28 family. MurG subfamily.

The protein localises to the cell membrane. The catalysed reaction is Mur2Ac(oyl-L-Ala-gamma-D-Glu-L-Lys-D-Ala-D-Ala)-di-trans,octa-cis-undecaprenyl diphosphate + UDP-N-acetyl-alpha-D-glucosamine = beta-D-GlcNAc-(1-&gt;4)-Mur2Ac(oyl-L-Ala-gamma-D-Glu-L-Lys-D-Ala-D-Ala)-di-trans,octa-cis-undecaprenyl diphosphate + UDP + H(+). It functions in the pathway cell wall biogenesis; peptidoglycan biosynthesis. In terms of biological role, cell wall formation. Catalyzes the transfer of a GlcNAc subunit on undecaprenyl-pyrophosphoryl-MurNAc-pentapeptide (lipid intermediate I) to form undecaprenyl-pyrophosphoryl-MurNAc-(pentapeptide)GlcNAc (lipid intermediate II). This chain is UDP-N-acetylglucosamine--N-acetylmuramyl-(pentapeptide) pyrophosphoryl-undecaprenol N-acetylglucosamine transferase, found in Lactobacillus delbrueckii subsp. bulgaricus (strain ATCC 11842 / DSM 20081 / BCRC 10696 / JCM 1002 / NBRC 13953 / NCIMB 11778 / NCTC 12712 / WDCM 00102 / Lb 14).